The sequence spans 260 residues: WUSCHEL-related homeobox 2 (260 aa).

Positions 10–74 (ASSSRWNPTK…NHKARQRQKQ (65 aa)) form a DNA-binding region, homeobox; WUS-type.

Belongs to the WUS homeobox family.

Its subcellular location is the nucleus. In terms of biological role, probable transcription factor involved in embryonic patterning. Required for apical embryo development after fertilization. Its specific localization to the apical daughter cell of the zygote, while WOX8 is confined to the basal cell, suggests that the asymmetric division of the plant zygote separates determinants of apical and basal cell fates. This is WUSCHEL-related homeobox 2 (WOX2) from Arabidopsis thaliana (Mouse-ear cress).